Here is a 217-residue protein sequence, read N- to C-terminus: Adapter protein MecA (217 aa).

Belongs to the MecA family. As to quaternary structure, homodimer.

Its function is as follows. Enables the recognition and targeting of unfolded and aggregated proteins to the ClpC protease or to other proteins involved in proteolysis. In Listeria monocytogenes serotype 4b (strain CLIP80459), this protein is Adapter protein MecA.